We begin with the raw amino-acid sequence, 106 residues long: Phosphoribosyl-ATP pyrophosphatase 1 (106 aa).

This sequence belongs to the PRA-PH family.

Its subcellular location is the cytoplasm. The catalysed reaction is 1-(5-phospho-beta-D-ribosyl)-ATP + H2O = 1-(5-phospho-beta-D-ribosyl)-5'-AMP + diphosphate + H(+). It functions in the pathway amino-acid biosynthesis; L-histidine biosynthesis; L-histidine from 5-phospho-alpha-D-ribose 1-diphosphate: step 2/9. The protein is Phosphoribosyl-ATP pyrophosphatase 1 (hisE1) of Bradyrhizobium diazoefficiens (strain JCM 10833 / BCRC 13528 / IAM 13628 / NBRC 14792 / USDA 110).